Here is a 1023-residue protein sequence, read N- to C-terminus: uncharacterized protein (1023 aa).

Positions 1–35 (MAEKRPLGPLGPMMYGKLPRLEPDPGPGHSLPLSA) are disordered. N6-acetyllysine is present on Lys-17. A phosphoserine mark is found at Ser-206 and Ser-383. Disordered stretches follow at residues 381-501 (GASP…PVID), 518-551 (PEPR…ASRS), 703-742 (PAPA…PEQH), 907-980 (EART…TLRA), and 1002-1023 (KASG…THHL). Thr-389 carries the phosphothreonine modification. Residues 391 to 400 (PSHSQNSVQP) show a composition bias toward polar residues. 3 stretches are compositionally biased toward basic and acidic residues: residues 425-436 (RPAEKPTPEAQE), 443-454 (CRKEQLQPRPNE), and 477-490 (CAKE…KDAR). Phosphoserine occurs at positions 493 and 494. The segment covering 706-722 (ASAPPPSPAPAPAPASG) has biased composition (pro residues). 3 positions are modified to phosphoserine: Ser-912, Ser-964, and Ser-972. The span at 963 to 972 (PSPSSGASTS) shows a compositional bias: low complexity.

This is an uncharacterized protein from Mus musculus (Mouse).